The primary structure comprises 118 residues: Large ribosomal subunit protein uL18 (118 aa).

The disordered stretch occupies residues 1–25 (MISKPDKNKIRQKRHRRVRGKLSGT). Residues 10-20 (IRQKRHRRVRG) show a composition bias toward basic residues.

This sequence belongs to the universal ribosomal protein uL18 family. Part of the 50S ribosomal subunit; part of the 5S rRNA/L5/L18/L25 subcomplex. Contacts the 5S and 23S rRNAs.

This is one of the proteins that bind and probably mediate the attachment of the 5S RNA into the large ribosomal subunit, where it forms part of the central protuberance. The sequence is that of Large ribosomal subunit protein uL18 from Streptococcus pyogenes serotype M5 (strain Manfredo).